The primary structure comprises 320 residues: Cytochrome f (320 aa).

An N-terminal signal peptide occupies residues Met-1–Ala-35. The heme site is built by Tyr-36, Cys-56, Cys-59, and His-60. Residues Val-286–Lys-306 traverse the membrane as a helical segment.

The protein belongs to the cytochrome f family. As to quaternary structure, the 4 large subunits of the cytochrome b6-f complex are cytochrome b6, subunit IV (17 kDa polypeptide, petD), cytochrome f and the Rieske protein, while the 4 small subunits are PetG, PetL, PetM and PetN. The complex functions as a dimer. Requires heme as cofactor.

Its subcellular location is the plastid. It localises to the chloroplast thylakoid membrane. Functionally, component of the cytochrome b6-f complex, which mediates electron transfer between photosystem II (PSII) and photosystem I (PSI), cyclic electron flow around PSI, and state transitions. The sequence is that of Cytochrome f from Olimarabidopsis pumila (Dwarf rocket).